The following is a 278-amino-acid chain: HTH-type transcriptional activator RhaS (278 aa).

The 99-residue stretch at 174–272 (NLLLAWLEDH…NWSPRDIRQG (99 aa)) folds into the HTH araC/xylS-type domain. 2 DNA-binding regions (H-T-H motif) span residues 191 to 212 (DAVA…KQQT) and 239 to 262 (VTDI…RREF).

As to quaternary structure, binds DNA as a dimer.

Its subcellular location is the cytoplasm. In terms of biological role, activates expression of the rhaBAD and rhaT operons. The protein is HTH-type transcriptional activator RhaS of Escherichia coli O139:H28 (strain E24377A / ETEC).